We begin with the raw amino-acid sequence, 125 residues long: Ribosome-binding factor A (125 aa).

Belongs to the RbfA family. Monomer. Binds 30S ribosomal subunits, but not 50S ribosomal subunits or 70S ribosomes.

It localises to the cytoplasm. Functionally, one of several proteins that assist in the late maturation steps of the functional core of the 30S ribosomal subunit. Associates with free 30S ribosomal subunits (but not with 30S subunits that are part of 70S ribosomes or polysomes). Required for efficient processing of 16S rRNA. May interact with the 5'-terminal helix region of 16S rRNA. This Desulfitobacterium hafniense (strain DSM 10664 / DCB-2) protein is Ribosome-binding factor A.